A 111-amino-acid chain; its full sequence is Resistin-like beta (111 aa).

Residues 1-23 (MGPSSCLLLILIPLLQLINPGST) form the signal peptide. Cystine bridges form between Cys55–Cys108, Cys67–Cys107, Cys76–Cys93, Cys78–Cys95, and Cys82–Cys97.

This sequence belongs to the resistin/FIZZ family. In terms of assembly, homodimer; disulfide-linked. As to expression, expressed only in the gastrointestinal tract, particularly the colon.

The protein resides in the secreted. Probable hormone. The protein is Resistin-like beta (RETNLB) of Homo sapiens (Human).